A 334-amino-acid chain; its full sequence is Delta(1)-pyrroline-2-carboxylate/Delta(1)-piperideine-2-carboxylate reductase (334 aa).

Ser44 functions as the Charge relay system in the catalytic mechanism. His45 (proton donor) is an active-site residue. Residue Arg49 participates in substrate binding. An NADP(+)-binding site is contributed by 117-121 (HFSAL). Thr157 contributes to the substrate binding site. 175–177 (DFA) contributes to the NADP(+) binding site. 183-184 (RG) serves as a coordination point for substrate. Glu185 (charge relay system) is an active-site residue. NADP(+) contacts are provided by residues 226 to 227 (HK) and 301 to 307 (RLPSQRR).

It belongs to the LDH2/MDH2 oxidoreductase family. In terms of assembly, homodimer.

The enzyme catalyses L-pipecolate + NADP(+) = Delta(1)-piperideine-2-carboxylate + NADPH + H(+). The catalysed reaction is L-proline + NADP(+) = 1-pyrroline-2-carboxylate + NADPH + H(+). It carries out the reaction cis-4-hydroxy-L-proline + NADP(+) = Delta(1)-pyrroline-(4S)-hydroxy-2-carboxylate + NADPH + 2 H(+). Its function is as follows. Catalyzes the reduction of both Delta(1)-pyrroline-2-carboxylate (Pyr2C) and Delta(1)-piperideine-2-carboxylate (Pip2C) to L-proline and L-pipecolate, respectively, using NADPH as the electron donor. Cannot use NADH instead of NADPH. Is likely involved in a degradation pathway that converts trans-3-hydroxy-L-proline (t3LHyp) to L-proline, which would allow P.aeruginosa to grow on t3LHyp as a sole carbon source. Can also catalyze the reverse oxidation reactions, albeit at a much lower rate. Is also able to use Delta(1)-pyrroline-(4S)-hydroxy-2-carboxylate (Pyr4SH2C) and cis-4-hydroxy-L-proline (c4LHyp) as substrates, and might be involved in the metabolism of c4LHyp, a compound which is generated by the hydroxylation of free L-proline in bacteria. In Pseudomonas aeruginosa (strain ATCC 15692 / DSM 22644 / CIP 104116 / JCM 14847 / LMG 12228 / 1C / PRS 101 / PAO1), this protein is Delta(1)-pyrroline-2-carboxylate/Delta(1)-piperideine-2-carboxylate reductase.